We begin with the raw amino-acid sequence, 626 residues long: NAD-dependent malic enzyme, mitochondrial (626 aa).

A mitochondrion-targeting transit peptide spans 1–34; it reads MAIFSNQMRLSSTLLKRLHQRVAAAVNSSSSRNF. Residues R91 and R125 each contribute to the fumarate site. The active-site Proton donor is Y146. A (S)-malate-binding site is contributed by R199. R199 lines the NAD(+) pocket. K217 (proton acceptor) is an active-site residue. 3 residues coordinate a divalent metal cation: E288, D289, and D312. A348 and A351 together coordinate NAD(+). (S)-malate-binding residues include N467 and N512.

It belongs to the malic enzymes family. In terms of assembly, heterodimer of two related subunits. Mg(2+) is required as a cofactor. The cofactor is Mn(2+).

It is found in the mitochondrion matrix. The enzyme catalyses (S)-malate + NAD(+) = pyruvate + CO2 + NADH. The protein is NAD-dependent malic enzyme, mitochondrial of Solanum tuberosum (Potato).